A 475-amino-acid chain; its full sequence is Arginine biosynthesis bifunctional protein ArgJ 1, mitochondrial (475 aa).

Positions 204, 233, 244, 331, 470, and 475 each coordinate substrate. T244 functions as the Nucleophile in the catalytic mechanism.

It belongs to the ArgJ family. Heterodimer of an alpha and a beta chain. Post-translationally, the alpha and beta chains are autoproteolytically processed from a single precursor protein within the mitochondrion.

It is found in the mitochondrion matrix. It carries out the reaction N(2)-acetyl-L-ornithine + L-glutamate = N-acetyl-L-glutamate + L-ornithine. The catalysed reaction is L-glutamate + acetyl-CoA = N-acetyl-L-glutamate + CoA + H(+). It functions in the pathway amino-acid biosynthesis; L-arginine biosynthesis; L-ornithine and N-acetyl-L-glutamate from L-glutamate and N(2)-acetyl-L-ornithine (cyclic): step 1/1. It participates in amino-acid biosynthesis; L-arginine biosynthesis; N(2)-acetyl-L-ornithine from L-glutamate: step 1/4. Its function is as follows. Catalyzes two activities which are involved in the cyclic version of arginine biosynthesis: the synthesis of acetylglutamate from glutamate and acetyl-CoA, and of ornithine by transacetylation between acetylornithine and glutamate. This Botryotinia fuckeliana (strain B05.10) (Noble rot fungus) protein is Arginine biosynthesis bifunctional protein ArgJ 1, mitochondrial.